The sequence spans 584 residues: DNA mismatch repair protein MutL (584 aa).

This sequence belongs to the DNA mismatch repair MutL/HexB family.

This protein is involved in the repair of mismatches in DNA. It is required for dam-dependent methyl-directed DNA mismatch repair. May act as a 'molecular matchmaker', a protein that promotes the formation of a stable complex between two or more DNA-binding proteins in an ATP-dependent manner without itself being part of a final effector complex. In Buchnera aphidicola subsp. Acyrthosiphon pisum (strain 5A), this protein is DNA mismatch repair protein MutL.